Consider the following 526-residue polypeptide: Fumitremorgin C synthase (526 aa).

The chain crosses the membrane as a helical span at residues 4–24 (LPLSPAVLFLTITLPILYFWI). Residue Cys443 coordinates heme.

The protein belongs to the cytochrome P450 family. Heme serves as cofactor.

The protein resides in the membrane. The catalysed reaction is tryprostatin A + reduced [NADPH--hemoprotein reductase] + O2 = fumitremorgin C + oxidized [NADPH--hemoprotein reductase] + 2 H2O + H(+). It functions in the pathway mycotoxin biosynthesis. In terms of biological role, cytochrome P450 monooxygenase; part of the gene cluster that mediates the biosynthesis of fumitremorgins, indole alkaloids that carry not only intriguing chemical structures, but also interesting biological and pharmacological activities. The biosynthesis of fumitremorgin-type alkaloids begins by condensation of the two amino acids L-tryptophan and L-proline to brevianamide F, catalyzed by the non-ribosomal peptide synthetase ftmPS/ftmA. Brevianamide F is then prenylated by the prenyltransferase ftmPT1/ftmB in the presence of dimethylallyl diphosphate, resulting in the formation of tryprostatin B. The three cytochrome P450 monooxygenases, ftmP450-1/ftmC, ftmP450-2/ftmE and ftmP450-3/FtmG, are responsible for the conversion of tryprostatin B to 6-hydroxytryprostatin B, tryprostatin A to fumitremorgin C and fumitremorgin C to 12,13-dihydroxyfumitremorgin C, respectively. The putative methyltransferase ftmMT/ftmD is expected for the conversion of 6-hydroxytryprostatin B to tryprostatin A. FtmPT2/FtmH catalyzes the prenylation of 12,13-dihydroxyfumitre-morgin C in the presence of dimethylallyl diphosphate, resulting in the formation of fumitremorgin B. Fumitremorgin B is further converted to verruculogen by ftmOx1/ftmF via the insertion of an endoperoxide bond between the two prenyl moieties. Finally, verruculogen is further converted to fumitremorgin A by the verruculogen prenyltransferase ftmPT3. The sequence is that of Fumitremorgin C synthase from Neosartorya fischeri (strain ATCC 1020 / DSM 3700 / CBS 544.65 / FGSC A1164 / JCM 1740 / NRRL 181 / WB 181) (Aspergillus fischerianus).